Reading from the N-terminus, the 144-residue chain is Succinate dehydrogenase cytochrome b560 subunit (144 aa).

Transmembrane regions (helical) follow at residues 40–60 (IFHRITGGVLALTLCFFILIL), 84–104 (GFLFIAISFFLLLFIFYHLFA), and 124–144 (LTGYIMLGLAFLFTLIAWIIF). Histidine 101 is a binding site for heme.

It belongs to the cytochrome b560 family. As to quaternary structure, forms part of complex II containing four subunits: a 70 kDa flavoprotein (FP), a 27 kDa iron-sulfur protein (IP), a cytochrome B and a membrane-anchoring protein. It depends on heme as a cofactor.

It is found in the mitochondrion inner membrane. It functions in the pathway carbohydrate metabolism; tricarboxylic acid cycle. Functionally, membrane-anchoring subunit of succinate dehydrogenase (SDH) that is involved in complex II of the mitochondrial electron transport chain and is responsible for transferring electrons from succinate to ubiquinone (coenzyme Q). The protein is Succinate dehydrogenase cytochrome b560 subunit (SDH3) of Reclinomonas americana.